Consider the following 430-residue polypeptide: MKQALRVAFGFLMLWAAVLHAEVRIEITQGVDSARPIGVVPFKWAGPGAAPEDIGGIVAADLRNSGKFNPLDRSRLPQQPATAQEVQPTAWSALGIDAVVVGQVTPNPDGSYNVAYQLVDTGGAPGTVLAQNSYKVNKQWLRYAGHTASDEVFEKLTGIKGAFRTRIAYVVQTNGGQFPYELRVSDYDGYNQFVVHRSPQPLMSPAWSPDGSKLAYVTFESGRSALVIQTLANGAVRQVASFPRHNGAPAFSPDGTKLAFALSKTGSLNLYVMDLASGQIRQITDGRSNNTEPTWFPDSQTLAFTSDQAGRPQVYKMNINGGAAQRITWEGSQNQDADVSSDGKFMVMVSSNNGQQHIAKQDLVTGGVQVLSSTFLDETPSLAPNGTMVIYSSSQGMGSVLNLVSTDGRFKARLPATDGQVKSPAWSPYL.

The N-terminal stretch at 1-21 (MKQALRVAFGFLMLWAAVLHA) is a signal peptide.

This sequence belongs to the TolB family. As to quaternary structure, the Tol-Pal system is composed of five core proteins: the inner membrane proteins TolA, TolQ and TolR, the periplasmic protein TolB and the outer membrane protein Pal. They form a network linking the inner and outer membranes and the peptidoglycan layer.

The protein resides in the periplasm. Its function is as follows. Part of the Tol-Pal system, which plays a role in outer membrane invagination during cell division and is important for maintaining outer membrane integrity. TolB occupies a key intermediary position in the Tol-Pal system because it communicates directly with both membrane-embedded components, Pal in the outer membrane and TolA in the inner membrane. This Salmonella enteritidis PT4 (strain P125109) protein is Tol-Pal system protein TolB.